The sequence spans 89 residues: Large ribosomal subunit protein bL27 (89 aa).

The interval 1 to 26 (MAQKKAGGSSRNGRDSVGQRRGVKRF) is disordered.

Belongs to the bacterial ribosomal protein bL27 family.

In Desulfovibrio desulfuricans (strain ATCC 27774 / DSM 6949 / MB), this protein is Large ribosomal subunit protein bL27.